Reading from the N-terminus, the 440-residue chain is MAAQVPTEALKELNVGGPATNDKAANPTEGNGVDHDSDDSDEEGEEVAAPAAGGAAKKKKKNKKKKKKKSPTAQSDPPRVLMSSLFPNKNYPKGQEEEYRDENLYRTTNEEKRHLDNLNNDFLTDYREAAEIHRQVRQWAQKNIKPGQTLTEIAEGIEDGVRALTGHPGIEEGDAYKGGMGFPCGLSLNHCAAHYTPNAGNKMVLSQGDVMKVDFGVHVNGRIVDSAFTMAFEPQYDNLLAAVKDATNAGVKEAGIDVRVGDVGGVIQEVMESYEVEIDGTTYPVKSIRNLNGHTIERWSIHGTKSVPIVKSNDTTKMEEGDVFAVETFGSTGNGFVREDMEVSHYAKRGEGHAALRLDSAKRLLNVINKNFGTLPFCRRYLDRLGQDKYLLGLNNLVSSGIVEAYPPLCDKKGSYTAQFEHTILLRPTVKEVISRGDDY.

Positions methionine 1–glutamate 102 are disordered. A compositionally biased stretch (acidic residues) spans aspartate 36 to glutamate 46. Positions alanine 56 to serine 70 are enriched in basic residues. Histidine 194 contacts substrate. 3 residues coordinate a divalent metal cation: aspartate 214, aspartate 225, and histidine 294. Histidine 302 serves as a coordination point for substrate. The a divalent metal cation site is built by glutamate 327 and glutamate 421.

Belongs to the peptidase M24A family. Methionine aminopeptidase eukaryotic type 2 subfamily. The cofactor is Co(2+). Zn(2+) serves as cofactor. Requires Mn(2+) as cofactor. It depends on Fe(2+) as a cofactor.

It localises to the cytoplasm. The catalysed reaction is Release of N-terminal amino acids, preferentially methionine, from peptides and arylamides.. Its function is as follows. Cotranslationally removes the N-terminal methionine from nascent proteins. The N-terminal methionine is often cleaved when the second residue in the primary sequence is small and uncharged (Met-Ala-, Cys, Gly, Pro, Ser, Thr, or Val). The sequence is that of Methionine aminopeptidase 2-2 from Colletotrichum graminicola (strain M1.001 / M2 / FGSC 10212) (Maize anthracnose fungus).